The primary structure comprises 350 residues: 4-hydroxy-2-oxovalerate aldolase 2 (350 aa).

The 253-residue stretch at 8-260 (ITVHDMTLRD…ETGVDVFKIQ (253 aa)) folds into the Pyruvate carboxyltransferase domain. 16–17 (RD) serves as a coordination point for substrate. Asp-17 provides a ligand contact to Mn(2+). Catalysis depends on His-20, which acts as the Proton acceptor. Residues Ser-170 and His-199 each contribute to the substrate site. Positions 199 and 201 each coordinate Mn(2+). Tyr-290 is a substrate binding site.

The protein belongs to the 4-hydroxy-2-oxovalerate aldolase family.

It catalyses the reaction (S)-4-hydroxy-2-oxopentanoate = acetaldehyde + pyruvate. This Comamonas testosteroni (Pseudomonas testosteroni) protein is 4-hydroxy-2-oxovalerate aldolase 2 (tesG).